A 1304-amino-acid chain; its full sequence is Probable inactive serine/threonine-protein kinase fnkC (1304 aa).

The Protein kinase domain maps to 33 to 402 (FEIIRILKKD…TNLLLTHKFI (370 aa)). ATP contacts are provided by residues 39-47 (LKKDEFSTT) and lysine 68. Residues 208–277 (KDNNNNNNNN…EAEGGGGGGE (70 aa)) form a disordered region. Over residues 210-269 (NNNNNNNNNNNNNNNNNNNNNNNNNNNNNNANNSNNNTLNNLSIVNNNSSSSSNDNSSEA) the composition is skewed to low complexity. 5 FNIP repeats span residues 514–556 (HSKS…LGSD), 710–753 (FNQL…FGRC), 754–797 (FNQP…FGSQ), 798–841 (YNQP…FGES), and 900–943 (YNDI…FGCD). MATH domains lie at 1025-1154 (QGSW…RIDA) and 1172-1291 (NQAF…NVSI).

The protein belongs to the protein kinase superfamily. STE Ser/Thr protein kinase family.

In Dictyostelium discoideum (Social amoeba), this protein is Probable inactive serine/threonine-protein kinase fnkC (fnkC).